The primary structure comprises 220 residues: Probable septum site-determining protein MinC (220 aa).

This sequence belongs to the MinC family. Interacts with MinD and FtsZ.

Cell division inhibitor that blocks the formation of polar Z ring septums. Rapidly oscillates between the poles of the cell to destabilize FtsZ filaments that have formed before they mature into polar Z rings. Prevents FtsZ polymerization. The chain is Probable septum site-determining protein MinC from Photobacterium profundum (strain SS9).